The chain runs to 394 residues: Protein DDI1 homolog 2 (394 aa).

A Ubiquitin-like domain is found at 1–81; the sequence is MLITVYCVRR…VILRQRETPE (81 aa). Residues 82-128 form a disordered region; it reads ARPAAPFPGLDFSTIAVPGSSSQPAPSQPQAPPPPPPDTSSFPQGLD. Residues 107–119 show a composition bias toward pro residues; the sequence is PSQPQAPPPPPPD. Asp-247 is a catalytic residue. The Ubiquitin-binding motif lies at 371-390; it reads EEIADRELAEVLQKSAEEAD.

Belongs to the DDI1 family. In terms of assembly, homodimer.

It is found in the cytoplasm. The protein resides in the cytosol. Its subcellular location is the chromosome. Its function is as follows. Aspartic protease that mediates the cleavage of NFE2L1/NRF1 at 'Leu-104', thereby promoting release of NFE2L1/NRF1 from the endoplasmic reticulum membrane. Ubiquitination of NFE2L1/NRF1 is a prerequisite for cleavage, suggesting that DDI2 specifically recognizes and binds ubiquitinated NFE2L1/NRF1. Seems to act as a proteasomal shuttle which links the proteasome and replication fork proteins like RTF2. Required for cellular survival following replication stress. The polypeptide is Protein DDI1 homolog 2 (ddi2) (Xenopus tropicalis (Western clawed frog)).